A 165-amino-acid chain; its full sequence is Thiol peroxidase (165 aa).

One can recognise a Thioredoxin domain in the interval 17-165 (PQVGEIVENF…NYEAALAVLA (149 aa)). Catalysis depends on Cys-59, which acts as the Cysteine sulfenic acid (-SOH) intermediate. A disulfide bridge connects residues Cys-59 and Cys-93.

The protein belongs to the peroxiredoxin family. Tpx subfamily. As to quaternary structure, homodimer.

It carries out the reaction a hydroperoxide + [thioredoxin]-dithiol = an alcohol + [thioredoxin]-disulfide + H2O. Thiol-specific peroxidase that catalyzes the reduction of hydrogen peroxide and organic hydroperoxides to water and alcohols, respectively. Plays a role in cell protection against oxidative stress by detoxifying peroxides. This is Thiol peroxidase from Haemophilus influenzae (strain ATCC 51907 / DSM 11121 / KW20 / Rd).